An 84-amino-acid polypeptide reads, in one-letter code: ATP synthase subunit c (84 aa).

Transmembrane regions (helical) follow at residues 9–29 (IIGASILLAFAALGTAIGFAI) and 54–74 (IVAGLLDAIAMIAVGISLLFI).

This sequence belongs to the ATPase C chain family. As to quaternary structure, F-type ATPases have 2 components, F(1) - the catalytic core - and F(0) - the membrane proton channel. F(1) has five subunits: alpha(3), beta(3), gamma(1), delta(1), epsilon(1). F(0) has three main subunits: a(1), b(2) and c(10-14). The alpha and beta chains form an alternating ring which encloses part of the gamma chain. F(1) is attached to F(0) by a central stalk formed by the gamma and epsilon chains, while a peripheral stalk is formed by the delta and b chains.

The protein localises to the cell inner membrane. Its function is as follows. F(1)F(0) ATP synthase produces ATP from ADP in the presence of a proton or sodium gradient. F-type ATPases consist of two structural domains, F(1) containing the extramembraneous catalytic core and F(0) containing the membrane proton channel, linked together by a central stalk and a peripheral stalk. During catalysis, ATP synthesis in the catalytic domain of F(1) is coupled via a rotary mechanism of the central stalk subunits to proton translocation. Key component of the F(0) channel; it plays a direct role in translocation across the membrane. A homomeric c-ring of between 10-14 subunits forms the central stalk rotor element with the F(1) delta and epsilon subunits. This chain is ATP synthase subunit c, found in Haemophilus influenzae (strain ATCC 51907 / DSM 11121 / KW20 / Rd).